The sequence spans 911 residues: Eukaryotic translation initiation factor 3 subunit C (911 aa).

Disordered regions lie at residues 1–38 (MSRF…DDEE) and 155–181 (SRFR…GEAA). The segment covering 11-20 (SESESSEEEV) has biased composition (acidic residues). Over residues 23–32 (PNFNKASAFQ) the composition is skewed to polar residues. Phosphoserine occurs at positions 34, 165, 175, and 184. Residues 162-171 (DQESEAEDEE) are compositionally biased toward acidic residues. Low complexity predominate over residues 196-208 (APKIAKSAPAKSV). Positions 196–284 (APKIAKSAPA…KRAEDDEDGE (89 aa)) are disordered. The span at 210-236 (ADDEDSDDSIDWDSDSESETESSEDEN) shows a compositional bias: acidic residues. Basic and acidic residues predominate over residues 241-271 (MRERFLKRSTEKGEDKGDDDKRKDKRKEQKL). The 177-residue stretch at 642-818 (FHMHINLELL…ETVVMHRSEP (177 aa)) folds into the PCI domain. Residues 851–911 (FQRGNMGNRG…QQQVQTIDEE (61 aa)) are disordered. The segment covering 885–896 (QRNRNQRGHHKN) has biased composition (basic residues). Low complexity predominate over residues 897–911 (QQQQQQQQVQTIDEE).

The protein belongs to the eIF-3 subunit C family. Component of the eukaryotic translation initiation factor 3 (eIF-3) complex. The eIF-3 complex interacts with pix.

It localises to the cytoplasm. Component of the eukaryotic translation initiation factor 3 (eIF-3) complex, which is involved in protein synthesis of a specialized repertoire of mRNAs and, together with other initiation factors, stimulates binding of mRNA and methionyl-tRNAi to the 40S ribosome. The eIF-3 complex specifically targets and initiates translation of a subset of mRNAs involved in cell proliferation. In Drosophila pseudoobscura pseudoobscura (Fruit fly), this protein is Eukaryotic translation initiation factor 3 subunit C.